A 76-amino-acid chain; its full sequence is Dermaseptin-SP2 (76 aa).

The N-terminal stretch at 1-22 (MAFLKKSLFLVLFLGLVSLSIC) is a signal peptide. Positions 23–45 (EEEKRENEDEEEQEDEEQSEEKR) are excised as a propeptide. A disordered region spans residues 24–44 (EEKRENEDEEEQEDEEQSEEK). Residues 30–41 (EDEEEQEDEEQS) are compositionally biased toward acidic residues. Gln73 is subject to Glutamine amide. The propeptide occupies 74–76 (GEQ).

Expressed by the skin glands.

The protein localises to the secreted. It is found in the target cell membrane. In terms of biological role, antimicrobial peptide with activity against Gram-positive and Gram-negative bacteria and fungi. Has been tested against E.coli (MIC=2.68-8 uM), S.aureus (ATCC 25923, MIC=2.68-8 uM), S.aureus (ATCC oxacillin resistant, MIC=2.68 uM), K.pneumoniae (MIC=10.71 uM) and C.albicans (MIC=10.71-32 uM). Probably acts by disturbing membrane functions with its alpha-helical amphipathic structure. May penetrate bacterial membranes, but stay at the mammalian membrane surface. Shows a very weak hemolytic activity. The polypeptide is Dermaseptin-SP2 (Agalychnis spurrelli (Gliding leaf frog)).